We begin with the raw amino-acid sequence, 415 residues long: Methylaspartate ammonia-lyase 2 (415 aa).

Gln-173 is a (2S,3S)-3-methyl-L-aspartate binding site. Mg(2+) is bound by residues Asp-238, Glu-273, and Asp-307. (2S,3S)-3-methyl-L-aspartate is bound at residue Gln-329. Residue Lys-331 is the Proton acceptor of the active site. 360-361 (TC) contacts (2S,3S)-3-methyl-L-aspartate.

This sequence belongs to the methylaspartate ammonia-lyase family. As to quaternary structure, homodimer. The cofactor is Mg(2+).

The enzyme catalyses (2S,3S)-3-methyl-L-aspartate = mesaconate + NH4(+). Its pathway is amino-acid degradation; L-glutamate degradation via mesaconate pathway; acetate and pyruvate from L-glutamate: step 2/4. In terms of biological role, involved in the methylaspartate cycle. Catalyzes the formation of the alpha,beta-unsaturated bond by the reversible anti elimination of ammonia from L-threo-beta-methylaspartate (L-threo-(2S,3S)-3-methylaspartate) to give mesaconate. This Carboxydothermus hydrogenoformans (strain ATCC BAA-161 / DSM 6008 / Z-2901) protein is Methylaspartate ammonia-lyase 2.